The chain runs to 242 residues: Octanoyltransferase (242 aa).

Positions Ser-31–Gln-206 constitute a BPL/LPL catalytic domain. Residues Arg-70–His-77, Ser-137–Gly-139, and Gly-150–Ala-152 contribute to the substrate site. The active-site Acyl-thioester intermediate is Cys-168.

The protein belongs to the LipB family.

It localises to the cytoplasm. The catalysed reaction is octanoyl-[ACP] + L-lysyl-[protein] = N(6)-octanoyl-L-lysyl-[protein] + holo-[ACP] + H(+). It participates in protein modification; protein lipoylation via endogenous pathway; protein N(6)-(lipoyl)lysine from octanoyl-[acyl-carrier-protein]: step 1/2. Its function is as follows. Catalyzes the transfer of endogenously produced octanoic acid from octanoyl-acyl-carrier-protein onto the lipoyl domains of lipoate-dependent enzymes. Lipoyl-ACP can also act as a substrate although octanoyl-ACP is likely to be the physiological substrate. This is Octanoyltransferase from Coxiella burnetii (strain Dugway 5J108-111).